Here is an 826-residue protein sequence, read N- to C-terminus: Protein FAM171B (826 aa).

The signal sequence occupies residues 1–32 (MARLCRRVPCTLLLGLAVVLLKARLVPAAARA). Over 33–353 (ELSRSDLSLI…DSKDITAYHT (321 aa)) the chain is Extracellular. Positions 52 to 71 (QQQQQKQLEEAEEERTEVPG) are disordered. N-linked (GlcNAc...) asparagine glycans are attached at residues N108, N113, N213, and N268. A helical transmembrane segment spans residues 354–374 (VFLTAILGGTIVIVIGFFAVL). At 375–826 (LCYCRDKCGT…REERPLIPIN (452 aa)) the chain is on the cytoplasmic side. Disordered stretches follow at residues 429–448 (NAKN…AETE), 474–493 (QNNY…GSKQ), and 774–826 (HPGE…IPIN). A compositionally biased stretch (basic and acidic residues) spans 438–448 (QKKEPSKAETE). Over residues 474–486 (QNNYSRNPTQSLE) the composition is skewed to polar residues. A compositionally biased stretch (basic and acidic residues) spans 774–786 (HPGEESPGRKSTV). S794 carries the post-translational modification Phosphoserine. Residues 805 to 826 (AKRDSKTNIWKKREERPLIPIN) are compositionally biased toward basic and acidic residues.

Belongs to the FAM171 family.

It is found in the cytoplasmic granule. The protein resides in the membrane. In Homo sapiens (Human), this protein is Protein FAM171B (FAM171B).